We begin with the raw amino-acid sequence, 387 residues long: Carboxyaminopropylagmatine decarboxylase (387 aa).

Lysine 52 carries the N6-(pyridoxal phosphate)lysine modification.

Belongs to the Orn/Lys/Arg decarboxylase class-II family. It depends on pyridoxal 5'-phosphate as a cofactor.

The catalysed reaction is N(1)-[(S)-3-amino-3-carboxypropyl]agmatine + H(+) = N(1)-(3-aminopropyl)agmatine + CO2. The protein operates within amine and polyamine biosynthesis; spermidine biosynthesis. Functionally, decarboxylase involved in the biosynthesis of spermidine via the carboxyaminopropylagmatine (CAPA) pathway. Catalyzes the decarboxylation of CAPA to form aminopropylagmatine (APA). Can also decarboxylate carboxyspermidine and carboxynorspermidine, but not ornithine, arginine, lysine and meso-diaminopimelate. The polypeptide is Carboxyaminopropylagmatine decarboxylase (Synechocystis sp. (strain ATCC 27184 / PCC 6803 / Kazusa)).